The following is a 307-amino-acid chain: Alginate lyase (307 aa).

The signal sequence occupies residues 1–20; it reads MLKSGVMVASLCLFSVPSRA.

The protein belongs to the polysaccharide lyase 7 family.

Its subcellular location is the secreted. The enzyme catalyses Eliminative cleavage of alginate to give oligosaccharides with 4-deoxy-alpha-L-erythro-hex-4-enuronosyl groups at their non-reducing ends and beta-D-mannuronate at their reducing end.. In terms of biological role, degrades alginates that contain guluronic acid. This Klebsiella pneumoniae protein is Alginate lyase (alyA).